We begin with the raw amino-acid sequence, 704 residues long: Acetate--CoA ligase [ADP-forming] (704 aa).

This sequence in the N-terminal section; belongs to the acetate CoA ligase alpha subunit family. The protein in the C-terminal section; belongs to the acetate CoA ligase beta subunit family. As to quaternary structure, homodimer.

It catalyses the reaction acetate + ATP + CoA = acetyl-CoA + ADP + phosphate. Catalyzes the formation of acetate and ATP from acetyl-CoA by using ADP and phosphate. Can also use butyryl-CoA, but not phenylacetyl-CoA. Cannot catalyze the reverse reaction. This is Acetate--CoA ligase [ADP-forming] from Methanocaldococcus jannaschii (strain ATCC 43067 / DSM 2661 / JAL-1 / JCM 10045 / NBRC 100440) (Methanococcus jannaschii).